The following is a 654-amino-acid chain: Hepatocyte growth factor activator serine proteases (654 aa).

Positions 1–33 (MGRWAWGPSLCPLPGMALLLLLLLLLVPHGAQP) are cleaved as a signal peptide. Residues 34–100 (QAGGNLTEPP…SSSPGDPVLT (67 aa)) are disordered. The propeptide at 34 to 370 (QAGGNLTEPP…RLAACESLAR (337 aa)) is removed in mature form. Residues asparagine 38 and asparagine 46 are each glycosylated (N-linked (GlcNAc...) asparagine). The span at 57–81 (PVTSVTPVTPATSAPEAQGPRGRGL) shows a compositional bias: low complexity. In terms of domain architecture, Fibronectin type-II spans 101–148 (VDGQPCRFPFRYGGRMLHACTSEGSAHRKWCATTHNYDRDRAWGYCVQ). Intrachain disulfides connect cysteine 106-cysteine 131, cysteine 120-cysteine 146, cysteine 162-cysteine 173, cysteine 167-cysteine 184, cysteine 186-cysteine 195, cysteine 200-cysteine 228, cysteine 226-cysteine 235, cysteine 243-cysteine 254, cysteine 248-cysteine 265, cysteine 267-cysteine 276, cysteine 284-cysteine 365, cysteine 305-cysteine 347, cysteine 336-cysteine 360, cysteine 393-cysteine 520, cysteine 431-cysteine 447, cysteine 439-cysteine 509, cysteine 534-cysteine 603, cysteine 566-cysteine 582, and cysteine 593-cysteine 621. Residues 158-196 (ALDSCASSPCLNGGSCSHTQDPGSYHCTCPMAFTGRNCD) enclose the EGF-like 1 domain. Residues 198–238 (EKCFDETRYEHLEAGDRWARVSQGQVEQCECAGGQIRCEGT) form the Fibronectin type-I domain. Residues 239 to 277 (RHTACLSSPCLNGGTCHLIVATGTTVCSCPPGHAGRLCN) form the EGF-like 2 domain. The region spanning 283–365 (RCFVGNGTEY…SWEYCRLAAC (83 aa)) is the Kringle domain. Asparagine 288 carries N-linked (GlcNAc...) asparagine glycosylation. A Peptidase S1 domain is found at 407-645 (IIGGSSSLPG…YVDWIKDRIW (239 aa)). Histidine 446 functions as the Charge relay system in the catalytic mechanism. Residues asparagine 467 and asparagine 491 are each glycosylated (N-linked (GlcNAc...) asparagine). The active-site Charge relay system is the aspartate 496. A glycan (N-linked (GlcNAc...) asparagine) is linked at asparagine 545. Catalysis depends on serine 597, which acts as the Charge relay system.

This sequence belongs to the peptidase S1 family. As to quaternary structure, heterodimer of a short chain and a long chain linked by a disulfide bond. Post-translationally, the active form of HGFAC presents in the serum is derived from the COOH-terminal region of the precursor by the cleavage of bonds between Arg-370 and Ile-371 and Arg-406 and Ile-407. In terms of tissue distribution, liver.

The protein localises to the secreted. In terms of biological role, serine protease that hydrolyzes the inactive zymogen hepatocyte growth factor (HGFsc) to an activated disulfide-linked heterodimer, then initiating hepatocyte growth factor receptor signaling pathway. This chain is Hepatocyte growth factor activator serine proteases (HGFAC), found in Canis lupus familiaris (Dog).